A 552-amino-acid polypeptide reads, in one-letter code: Phosphoribosylaminoimidazole carboxylase (552 aa).

The ATP-grasp domain occupies 108–295; that stretch reads KQHLQVFKIA…QFEAHLRAIC (188 aa). 134-189 is an ATP binding site; sequence GQEFGYPFVLKSKTLAYDGRGNYVVHQPSEIPTAIKALGDRPLYVEKFVPFSMEIA.

The protein in the C-terminal section; belongs to the AIR carboxylase family. Class I subfamily.

It catalyses the reaction 5-amino-1-(5-phospho-D-ribosyl)imidazole-4-carboxylate + H(+) = 5-amino-1-(5-phospho-beta-D-ribosyl)imidazole + CO2. Its pathway is purine metabolism; IMP biosynthesis via de novo pathway; 5-amino-1-(5-phospho-D-ribosyl)imidazole-4-carboxylate from 5-amino-1-(5-phospho-D-ribosyl)imidazole (carboxylase route): step 1/1. This Schizosaccharomyces pombe (strain 972 / ATCC 24843) (Fission yeast) protein is Phosphoribosylaminoimidazole carboxylase (ade6).